Consider the following 142-residue polypeptide: Hemoglobin F-I (142 aa).

The 141-residue stretch at 2–142 folds into the Globin domain; it reads GLTTAQIKAI…AAGVLVAAMK (141 aa). His95 contributes to the heme b binding site.

It belongs to the globin family. In terms of assembly, homotetramer.

Functionally, hemoglobin F-I appears to function in storage, rather than transport of oxygen. This chain is Hemoglobin F-I, found in Urechis caupo (Innkeeper worm).